Reading from the N-terminus, the 278-residue chain is HTH-type transcriptional activator RhaS (278 aa).

Residues 174–272 (NLLLAWLEDH…NWSPRDIRQG (99 aa)) form the HTH araC/xylS-type domain. DNA-binding regions (H-T-H motif) lie at residues 191 to 212 (DAVA…KQQT) and 239 to 262 (VTDI…RREF).

As to quaternary structure, binds DNA as a dimer.

Its subcellular location is the cytoplasm. Functionally, activates expression of the rhaBAD and rhaT operons. The sequence is that of HTH-type transcriptional activator RhaS from Escherichia coli (strain SE11).